Consider the following 102-residue polypeptide: Thioredoxin (102 aa).

Residues 1–102 (MVQVVSQENF…SLIKLISKHQ (102 aa)) form the Thioredoxin domain. A disulfide bridge connects residues Cys-28 and Cys-31.

Belongs to the thioredoxin family.

Its function is as follows. Participates in various redox reactions through the reversible oxidation of its active center dithiol to a disulfide and catalyzes dithiol-disulfide exchange reactions. This is Thioredoxin (trxA) from Chlamydia trachomatis serovar D (strain ATCC VR-885 / DSM 19411 / UW-3/Cx).